A 123-amino-acid chain; its full sequence is Large ribosomal subunit protein bL12 (123 aa).

This sequence belongs to the bacterial ribosomal protein bL12 family. In terms of assembly, homodimer. Part of the ribosomal stalk of the 50S ribosomal subunit. Forms a multimeric L10(L12)X complex, where L10 forms an elongated spine to which 2 to 4 L12 dimers bind in a sequential fashion. Binds GTP-bound translation factors.

Forms part of the ribosomal stalk which helps the ribosome interact with GTP-bound translation factors. Is thus essential for accurate translation. This chain is Large ribosomal subunit protein bL12, found in Acinetobacter baumannii (strain AB307-0294).